A 359-amino-acid chain; its full sequence is Cytochrome c oxidase subunit 2 (359 aa).

The N-terminal stretch at 1–28 (MEQQNKRGLKRKALLGGVLGSGGLAMAG) is a signal peptide. Cys-29 carries the N-palmitoyl cysteine lipid modification. A lipid anchor (S-diacylglycerol cysteine) is attached at Cys-29. Helical transmembrane passes span 64–84 (VWVAAWIIGIIMWGLMLTAIF) and 107–127 (VPLELVLTIVPIIIVMVLFFF). The Cu cation site is built by His-244, Cys-285, Glu-287, Cys-289, His-293, and Met-296. The interval 338 to 359 (STAPFVSDRTGTRDGENFQTPA) is disordered.

The protein belongs to the cytochrome c oxidase subunit 2 family. As to quaternary structure, associates with subunits I, III and IV to form cytochrome c oxidase. It depends on binuclear copper center (CuA) as a cofactor.

The protein resides in the cell membrane. The enzyme catalyses 4 Fe(II)-[cytochrome c] + O2 + 8 H(+)(in) = 4 Fe(III)-[cytochrome c] + 2 H2O + 4 H(+)(out). Subunits I and II form the functional core of the enzyme complex. Electrons originating in cytochrome c are transferred via heme a and Cu(A) to the binuclear center formed by heme a3 and Cu(B). This Corynebacterium efficiens (strain DSM 44549 / YS-314 / AJ 12310 / JCM 11189 / NBRC 100395) protein is Cytochrome c oxidase subunit 2 (ctaC).